A 303-amino-acid chain; its full sequence is MIATGHGGAERRTTAGDGTARPVVARTIGELRAARAALTGPVAFVPTMGALHDGHRSLLRIARHHGDHVVVSIFVNPLQFGPAEDFDRYPRTLDADLAMCAAEGVDLVFVPPAAEMYPSEPQVRVSAGPLGERFEGSVRPGHFDGVLTVVAKLFQLVQPDVAVFGRKDAQQLALVRRMVADLNLPVQIIAAPTFREPDGLAASSRNRYLTDADRAQARALPTALTTAAAVAAAGGPPSEMIEMARKVLADAAVTLDYVAVVDEATFDEIDDAEWSQRGEGLCIAAIRVGGTRLIDNMPMRKAD.

Residues 1–21 (MIATGHGGAERRTTAGDGTAR) are disordered. 48 to 55 (MGALHDGH) is a binding site for ATP. Catalysis depends on His55, which acts as the Proton donor. (R)-pantoate is bound at residue Gln79. Gln79 provides a ligand contact to beta-alanine. 165 to 168 (GRKD) is an ATP binding site. Residue Gln171 coordinates (R)-pantoate. An ATP-binding site is contributed by 202–205 (ASSR).

It belongs to the pantothenate synthetase family. Homodimer.

The protein resides in the cytoplasm. It catalyses the reaction (R)-pantoate + beta-alanine + ATP = (R)-pantothenate + AMP + diphosphate + H(+). Its pathway is cofactor biosynthesis; (R)-pantothenate biosynthesis; (R)-pantothenate from (R)-pantoate and beta-alanine: step 1/1. Functionally, catalyzes the condensation of pantoate with beta-alanine in an ATP-dependent reaction via a pantoyl-adenylate intermediate. This Acidothermus cellulolyticus (strain ATCC 43068 / DSM 8971 / 11B) protein is Pantothenate synthetase.